We begin with the raw amino-acid sequence, 215 residues long: Golgi-associated RAB2 interactor protein 5A (215 aa).

Disordered regions lie at residues methionine 1–glycine 20 and glutamine 174–leucine 215. Residues alanine 178 to arginine 191 are compositionally biased toward acidic residues.

This sequence belongs to the GARIN family. As to quaternary structure, interacts (via N-terminus) with RAB2B (in GTP-bound form).

The protein localises to the golgi apparatus. Its function is as follows. RAB2B effector protein which promotes cytosolic DNA-induced innate immune responses. Regulates IFN responses against DNA viruses by regulating the CGAS-STING signaling axis. The protein is Golgi-associated RAB2 interactor protein 5A (GARIN5A) of Bos taurus (Bovine).